A 253-amino-acid polypeptide reads, in one-letter code: Glutamate racemase (253 aa).

Substrate-binding positions include 7 to 8 (DS) and 39 to 40 (YG). Cys-70 functions as the Proton donor/acceptor in the catalytic mechanism. 71-72 (NT) is a substrate binding site. Cys-180 (proton donor/acceptor) is an active-site residue. A substrate-binding site is contributed by 181-182 (TH).

It belongs to the aspartate/glutamate racemases family.

It carries out the reaction L-glutamate = D-glutamate. Its pathway is cell wall biogenesis; peptidoglycan biosynthesis. Its function is as follows. Provides the (R)-glutamate required for cell wall biosynthesis. This is Glutamate racemase from Halothermothrix orenii (strain H 168 / OCM 544 / DSM 9562).